Here is a 337-residue protein sequence, read N- to C-terminus: Ribosomal RNA small subunit methyltransferase C (337 aa).

It belongs to the methyltransferase superfamily. RsmC family. As to quaternary structure, monomer.

It is found in the cytoplasm. The enzyme catalyses guanosine(1207) in 16S rRNA + S-adenosyl-L-methionine = N(2)-methylguanosine(1207) in 16S rRNA + S-adenosyl-L-homocysteine + H(+). In terms of biological role, specifically methylates the guanine in position 1207 of 16S rRNA in the 30S particle. This chain is Ribosomal RNA small subunit methyltransferase C, found in Acinetobacter baumannii (strain ACICU).